The chain runs to 485 residues: uncharacterized protein (485 aa).

The next 13 helical transmembrane spans lie at W13–S33, P38–A58, A79–S99, L111–Y131, V160–V180, L211–T231, I234–A254, I297–F317, W321–A341, I365–A385, F388–L408, F420–I440, and L445–I465.

The protein belongs to the polysaccharide synthase family.

It localises to the cell membrane. This is an uncharacterized protein from Klebsiella pneumoniae.